Reading from the N-terminus, the 890-residue chain is MSANNSPPSAQKSVLPTAIPAVLPAASPCSSPKTGLSARLSNGSFSAPSLTNSRGSVHTVSFLLQIGLTRESVTIEAQELSLSAVKDLVCSIVYQKFPECGFFGMYDKILLFRHDMNSENILQLITSADEIHEGDLVEVVLSALATVEDFQIRPHTLYVHSYKAPTFCDYCGEMLWGLVRQGLKCEGCGLNYHKRCAFKIPNNCSGVRKRRLSNVSLPGPGLSVPRPLQPEYVALPSEESHVHQEPSKRIPSWSGRPIWMEKMVMCRVKVPHTFAVHSYTRPTICQYCKRLLKGLFRQGMQCKDCKFNCHKRCASKVPRDCLGEVTFNGEPSSLGTDTDIPMDIDNNDINSDSSRGLDDTEEPSPPEDKMFFLDPSDLDVERDEEAVKTISPSTSNNIPLMRVVQSIKHTKRKSSTMVKEGWMVHYTSRDNLRKRHYWRLDSKCLTLFQNESGSKYYKEIPLSEILRISSPRDFTNISQGSNPHCFEIITDTMVYFVGENNGDSSHNPVLAATGVGLDVAQSWEKAIRQALMPVTPQASVCTSPGQGKDHKDLSTSISVSNCQIQENVDISTVYQIFADEVLGSGQFGIVYGGKHRKTGRDVAIKVIDKMRFPTKQESQLRNEVAILQNLHHPGIVNLECMFETPERVFVVMEKLHGDMLEMILSSEKSRLPERITKFMVTQILVALRNLHFKNIVHCDLKPENVLLASAEPFPQVKLCDFGFARIIGEKSFRRSVVGTPAYLAPEVLRSKGYNRSLDMWSVGVIIYVSLSGTFPFNEDEDINDQIQNAAFMYPPNPWREISGEAIDLINNLLQVKMRKRYSVDKSLSHPWLQDYQTWLDLREFETRIGERYITHESDDARWEIHAYTHNLVYPKHFIMAPNPDDMEEDP.

5 positions are modified to phosphoserine: Ser6, Ser27, Ser37, Ser41, and Ser44. A Phorbol-ester/DAG-type 1 zinc finger spans residues 154–204 (PHTLYVHSYKAPTFCDYCGEMLWGLVRQGLKCEGCGLNYHKRCAFKIPNNC). 2 positions are modified to phosphoserine: Ser213 and Ser216. The Phorbol-ester/DAG-type 2 zinc finger occupies 271–321 (PHTFAVHSYTRPTICQYCKRLLKGLFRQGMQCKDCKFNCHKRCASKVPRDC). Positions 332-371 (SSLGTDTDIPMDIDNNDINSDSSRGLDDTEEPSPPEDKMF) are disordered. Phosphoserine occurs at positions 364, 391, and 395. Residues 416–532 (TMVKEGWMVH…WEKAIRQALM (117 aa)) enclose the PH domain. Tyr426 bears the Phosphotyrosine mark. Ser442 is subject to Phosphoserine. Tyr457 bears the Phosphotyrosine mark. Thr535 carries the phosphothreonine modification. Ser539 carries the post-translational modification Phosphoserine. The Protein kinase domain occupies 576-832 (IFADEVLGSG…VDKSLSHPWL (257 aa)). ATP-binding positions include 582-590 (LGSGQFGIV) and Lys605. The active-site Proton acceptor is Asp699. Ser731 carries the phosphoserine; by PKC modification. Position 735 is a phosphoserine; by autocatalysis (Ser735). Tyr742 carries the phosphotyrosine modification.

This sequence belongs to the protein kinase superfamily. CAMK Ser/Thr protein kinase family. PKD subfamily. It depends on Mg(2+) as a cofactor. In terms of tissue distribution, ubiquitous.

It is found in the cytoplasm. The protein resides in the membrane. The enzyme catalyses L-seryl-[protein] + ATP = O-phospho-L-seryl-[protein] + ADP + H(+). It carries out the reaction L-threonyl-[protein] + ATP = O-phospho-L-threonyl-[protein] + ADP + H(+). Activated by DAG and phorbol esters. Phorbol-ester/DAG-type domains 1 and 2 bind both DAG and phorbol ester with high affinity and mediate translocation to the cell membrane. Autophosphorylation of Ser-735 and phosphorylation of Ser-731 by PKC relieves auto-inhibition by the PH domain. Its function is as follows. Converts transient diacylglycerol (DAG) signals into prolonged physiological effects, downstream of PKC. Involved in resistance to oxidative stress. The chain is Serine/threonine-protein kinase D3 (PRKD3) from Homo sapiens (Human).